A 289-amino-acid chain; its full sequence is Phosphatidylserine decarboxylase proenzyme (289 aa).

Residues aspartate 92, histidine 149, and serine 254 each act as charge relay system; for autoendoproteolytic cleavage activity in the active site. The active-site Schiff-base intermediate with substrate; via pyruvic acid; for decarboxylase activity is serine 254. Serine 254 is modified (pyruvic acid (Ser); by autocatalysis).

The protein belongs to the phosphatidylserine decarboxylase family. PSD-B subfamily. Prokaryotic type I sub-subfamily. In terms of assembly, heterodimer of a large membrane-associated beta subunit and a small pyruvoyl-containing alpha subunit. Requires pyruvate as cofactor. Post-translationally, is synthesized initially as an inactive proenzyme. Formation of the active enzyme involves a self-maturation process in which the active site pyruvoyl group is generated from an internal serine residue via an autocatalytic post-translational modification. Two non-identical subunits are generated from the proenzyme in this reaction, and the pyruvate is formed at the N-terminus of the alpha chain, which is derived from the carboxyl end of the proenzyme. The autoendoproteolytic cleavage occurs by a canonical serine protease mechanism, in which the side chain hydroxyl group of the serine supplies its oxygen atom to form the C-terminus of the beta chain, while the remainder of the serine residue undergoes an oxidative deamination to produce ammonia and the pyruvoyl prosthetic group on the alpha chain. During this reaction, the Ser that is part of the protease active site of the proenzyme becomes the pyruvoyl prosthetic group, which constitutes an essential element of the active site of the mature decarboxylase.

The protein localises to the cell membrane. The catalysed reaction is a 1,2-diacyl-sn-glycero-3-phospho-L-serine + H(+) = a 1,2-diacyl-sn-glycero-3-phosphoethanolamine + CO2. The protein operates within phospholipid metabolism; phosphatidylethanolamine biosynthesis; phosphatidylethanolamine from CDP-diacylglycerol: step 2/2. Catalyzes the formation of phosphatidylethanolamine (PtdEtn) from phosphatidylserine (PtdSer). In Pseudomonas aeruginosa (strain ATCC 15692 / DSM 22644 / CIP 104116 / JCM 14847 / LMG 12228 / 1C / PRS 101 / PAO1), this protein is Phosphatidylserine decarboxylase proenzyme.